Here is a 245-residue protein sequence, read N- to C-terminus: Myelin-oligodendrocyte glycoprotein (245 aa).

Residues 1–27 (MASLSKPSLPSYLCFLLLLLHVSSSYG) form the signal peptide. Residues 28-152 (GQFRVIGPSH…EDPFYWVSPG (125 aa)) lie on the Extracellular side of the membrane. The Ig-like V-type domain occupies 29-143 (QFRVIGPSHP…EEAAMQLKVE (115 aa)). C51 and C125 are oxidised to a cystine. N58 carries an N-linked (GlcNAc...) asparagine glycan. A helical transmembrane segment spans residues 153-173 (VLVLLAVLPVLFLQITVGLVF). Residues 174–208 (LYLQHRLRGKLRAEIENLHRTFDPHFLRVPCWKIT) are Cytoplasmic-facing. Residues 209–229 (LFVIVPVLGPLVALIICYNWL) form a helical membrane-spanning segment. Residues 230–245 (HRRLAGQFLEELRNPF) are Extracellular-facing.

This sequence belongs to the immunoglobulin superfamily. BTN/MOG family. In terms of assembly, homodimer.

The protein localises to the membrane. In terms of biological role, minor component of the myelin sheath. May be involved in completion and/or maintenance of the myelin sheath and in cell-cell communication. Mediates homophilic cell-cell adhesion. The protein is Myelin-oligodendrocyte glycoprotein (MOG) of Callithrix jacchus (White-tufted-ear marmoset).